We begin with the raw amino-acid sequence, 591 residues long: L-fucose isomerase (591 aa).

Active-site proton acceptor residues include Glu337 and Asp361. Mn(2+) is bound by residues Glu337, Asp361, and His528.

The protein belongs to the L-fucose isomerase family. As to quaternary structure, homohexamer. The cofactor is Mn(2+).

The protein resides in the cytoplasm. It catalyses the reaction L-fucose = L-fuculose. It participates in carbohydrate degradation; L-fucose degradation; L-lactaldehyde and glycerone phosphate from L-fucose: step 1/3. In terms of biological role, converts the aldose L-fucose into the corresponding ketose L-fuculose. This is L-fucose isomerase from Salmonella choleraesuis (strain SC-B67).